The chain runs to 445 residues: Argininosuccinate synthase (445 aa).

ATP contacts are provided by residues 17-25 (AFSGGLDTS) and alanine 43. An L-citrulline-binding site is contributed by tyrosine 99. Glycine 129 and threonine 131 together coordinate ATP. 3 residues coordinate L-aspartate: threonine 131, asparagine 135, and aspartate 136. Asparagine 135 lines the L-citrulline pocket. Aspartate 136 contributes to the ATP binding site. Residues arginine 139 and serine 192 each coordinate L-citrulline. Aspartate 194 provides a ligand contact to ATP. Residues threonine 201, glutamate 203, and glutamate 280 each contribute to the L-citrulline site.

This sequence belongs to the argininosuccinate synthase family. Type 2 subfamily. In terms of assembly, homotetramer.

The protein resides in the cytoplasm. The catalysed reaction is L-citrulline + L-aspartate + ATP = 2-(N(omega)-L-arginino)succinate + AMP + diphosphate + H(+). It functions in the pathway amino-acid biosynthesis; L-arginine biosynthesis; L-arginine from L-ornithine and carbamoyl phosphate: step 2/3. This chain is Argininosuccinate synthase, found in Acidobacterium capsulatum (strain ATCC 51196 / DSM 11244 / BCRC 80197 / JCM 7670 / NBRC 15755 / NCIMB 13165 / 161).